Here is a 201-residue protein sequence, read N- to C-terminus: FMN-dependent NADH:quinone oxidoreductase (201 aa).

FMN-binding positions include Ser-10, 16 to 18 (SQS), 96 to 99 (MYNF), and 140 to 143 (SRGG).

The protein belongs to the azoreductase type 1 family. Homodimer. Requires FMN as cofactor.

It carries out the reaction 2 a quinone + NADH + H(+) = 2 a 1,4-benzosemiquinone + NAD(+). The catalysed reaction is N,N-dimethyl-1,4-phenylenediamine + anthranilate + 2 NAD(+) = 2-(4-dimethylaminophenyl)diazenylbenzoate + 2 NADH + 2 H(+). Its function is as follows. Quinone reductase that provides resistance to thiol-specific stress caused by electrophilic quinones. Also exhibits azoreductase activity. Catalyzes the reductive cleavage of the azo bond in aromatic azo compounds to the corresponding amines. The chain is FMN-dependent NADH:quinone oxidoreductase from Pectobacterium atrosepticum (strain SCRI 1043 / ATCC BAA-672) (Erwinia carotovora subsp. atroseptica).